The primary structure comprises 148 residues: Prefoldin subunit alpha (148 aa).

This sequence belongs to the prefoldin subunit alpha family. Heterohexamer of two alpha and four beta subunits.

It is found in the cytoplasm. Functionally, molecular chaperone capable of stabilizing a range of proteins. Seems to fulfill an ATP-independent, HSP70-like function in archaeal de novo protein folding. This Pyrococcus horikoshii (strain ATCC 700860 / DSM 12428 / JCM 9974 / NBRC 100139 / OT-3) protein is Prefoldin subunit alpha (pfdA).